Here is a 146-residue protein sequence, read N- to C-terminus: Large ribosomal subunit protein uL16 (146 aa).

This sequence belongs to the universal ribosomal protein uL16 family. As to quaternary structure, part of the 50S ribosomal subunit.

Functionally, binds 23S rRNA and is also seen to make contacts with the A and possibly P site tRNAs. The protein is Large ribosomal subunit protein uL16 of Thermomicrobium roseum (strain ATCC 27502 / DSM 5159 / P-2).